A 429-amino-acid chain; its full sequence is Fc receptor-like protein 1 (429 aa).

The N-terminal stretch at 1 to 16 (MLPRLLLLICAPLCEP) is a signal peptide. Ig-like C2-type domains lie at 17–104 (AELF…SQIN), 109–200 (PVAD…VSIT), and 208–291 (PILM…EAVT). Topologically, residues 17-307 (AELFLIASPS…TGARSNHLTS (291 aa)) are extracellular. Disulfide bonds link Cys38–Cys86, Cys134–Cys183, and Cys229–Cys276. Asn293 carries an N-linked (GlcNAc...) asparagine glycan. Residues 308-328 (GVIEGLLSTLGPATVALLFCY) form a helical membrane-spanning segment. Over 329–429 (GLKRKIGRRS…ITDVDYEDAM (101 aa)) the chain is Cytoplasmic. 5 consecutive short sequence motifs (ITIM motif) follow at residues 354 to 359 (FTYLNS), 367 to 372 (PIYENV), 379 to 384 (EVYSLA), 410 to 415 (DIYSRL), and 423 to 428 (VDYEDA).

As to quaternary structure, interacts with ABL1. Interacts with GRB2 and SOS1. Interacts with SHIP-1/INPP5D. Post-translationally, phosphorylated on tyrosines upon activation. Primarily expressed in secondary lymphoid tissues by mature subsets of B-cells. Detected in spleen, lymph node, heart, skeletal muscle, kidney, liver and placenta. Specifically expressed by mature B lineage cells with higher expression in naive versus memory B-cells (at protein level).

Its subcellular location is the cell membrane. Type I transmembrane surface glycoprotein preferentially expressed by B-cells that regulates BCR-mediated signaling responses. Recruits ABL1 as the intracellular effector molecule to enhance B-cell activation. Also plays a negative role by suppressing ERK activation under homeostatic and BCR-stimulated conditions in a GRB2-dependent manner. In Homo sapiens (Human), this protein is Fc receptor-like protein 1 (FCRL1).